Here is a 207-residue protein sequence, read N- to C-terminus: Protein lin-7 homolog B (207 aa).

The short motif at 1-13 is the Kinase interacting site element; that stretch reads MAALVEPLGLERD. The region spanning 10 to 65 is the L27 domain; it reads LERDVSRAVELLERLQRSGELPPQKLQALQRVLQSRFCSAIREVYEQLYDTLDITG. Positions 93–175 constitute a PDZ domain; the sequence is VVELPKTDEG…SVKLVVRYTP (83 aa). The tract at residues 187–207 is disordered; it reads KMRSARRRQQHHSYTSLESRG. The span at 198-207 shows a compositional bias: polar residues; the sequence is HSYTSLESRG.

The protein belongs to the lin-7 family. Forms a complex with CASK and CASKIN1. Component of the brain-specific heterotrimeric complex (LIN-10-LIN-2-LIN-7 complex) composed of at least APBA1, CASK, and LIN7, which associates with the motor protein KIF17 to transport vesicles along microtubules. Forms a heterotrimeric complex composed of MMP5, LIN7B and PATJ; the N-terminal L27 domain of PALS1 interacts with the L27 domain of PATJ and the C-terminal L27 domain of PALS1 interacts with the L27 domain of LIN7B. Forms a heterotrimeric complex with DLG1 and CASK via their L27 domains. Interacts with DLG4 and GRIN2B as well as CDH1 and CTNNB1, the channels KCNJ12/Kir2.2, KCNJ4/Kir2.3 and probably KCNJ2/Kir2.1 and SLC6A12/BGT-1 via its PDZ domain. The association of LIN7A with cadherin and beta-catenin is calcium-dependent, occurs at synaptic junctions and requires the actin cytoskeleton. Interacts with EGFR, ERBB2, ERBB3 and ERBB4 with both PDZ and KID domains. Associates with KIF17 via APBA1. Interacts with ASIC3. Interacts with TOPK. Interacts with RTKN. Interacts with APBA1. Interacts with MPP7. Interacts with DLG2. Interacts with DLG3. As to expression, expressed in the kidney; predominantly in the vasa recta.

It localises to the cell membrane. The protein localises to the basolateral cell membrane. Its subcellular location is the cell junction. It is found in the postsynaptic density membrane. The protein resides in the tight junction. Its function is as follows. Plays a role in establishing and maintaining the asymmetric distribution of channels and receptors at the plasma membrane of polarized cells. Forms membrane-associated multiprotein complexes that may regulate delivery and recycling of proteins to the correct membrane domains. The tripartite complex composed of LIN7 (LIN7A, LIN7B or LIN7C), CASK and APBA1 associates with the motor protein KIF17 to transport vesicles containing N-methyl-D-aspartate (NMDA) receptor subunit NR2B along microtubules. This complex may have the potential to couple synaptic vesicle exocytosis to cell adhesion in brain. Ensures the proper localization of GRIN2B (subunit 2B of the NMDA receptor) to neuronal postsynaptic density and may function in localizing synaptic vesicles at synapses where it is recruited by beta-catenin and cadherin. Required to localize Kir2 channels, GABA transporter (SLC6A12) and EGFR/ERBB1, ERBB2, ERBB3 and ERBB4 to the basolateral membrane of epithelial cells. May increase the amplitude of ASIC3 acid-evoked currents by stabilizing the channel at the cell surface. The polypeptide is Protein lin-7 homolog B (Lin7b) (Mus musculus (Mouse)).